The sequence spans 167 residues: Ubiquitin-fold modifier-conjugating enzyme 1 (167 aa).

Residue Cys116 is the Glycyl thioester intermediate of the active site. A Glycyl lysine isopeptide (Lys-Gly) (interchain with G-Cter in UFM1) cross-link involves residue Lys122.

Belongs to the ubiquitin-conjugating enzyme family. UFC1 subfamily. As to quaternary structure, interacts with UBA5 (via C-terminus). Interacts with UFL1. Interacts with UFM1. Interacts with KIRREL3. Ufmylated at Lys-122. Deufmylated by UFSP1.

In terms of biological role, E2-like enzyme which specifically catalyzes the second step in ufmylation. Accepts the ubiquitin-like modifier UFM1 from the E1 enzyme UBA5 and forms an intermediate with UFM1 via a thioester linkage. Ufmylation is involved in various processes, such as ribosome recycling, response to DNA damage, interferon response or reticulophagy (also called ER-phagy). This chain is Ubiquitin-fold modifier-conjugating enzyme 1, found in Mus musculus (Mouse).